Consider the following 278-residue polypeptide: BPI fold-containing family A member 1 (278 aa).

A signal peptide spans 1–19 (MFLVGSLVVLCGLLAHSTA). Repeat repeat units lie at residues 23-28 (GLPLPL), 30-36 (QGPPLPL), 39-44 (GPPLPL), and 47-52 (GQLLPL). The tract at residues 23–52 (GLPLPLGQGPPLPLNQGPPLPLNQGQLLPL) is 4 X 6 AA repeats of G-[LPQ]-[PL]-L-P-L. Positions 112-117 (LVGGLL) are important for surfactant activity and antibacterial properties. N-linked (GlcNAc...) asparagine glycosylation is found at asparagine 182 and asparagine 228. A disulfide bond links cysteine 204 and cysteine 246.

This sequence belongs to the BPI/LBP/Plunc superfamily. Plunc family. Monomer. Interacts (via N-terminus) with SCNN1B, a subunit of the heterotrimeric epithelial sodium channel (ENaC); this inhibits proteolytic activation of ENaC. As to expression, detected in airway epithelia (trachea and lung) and in bronchoalveolar fluid (at protein level). Upper airways, nasopharyngeal epithelium and thymus. Highest expression in the trachea and progressive decrease from proximal (bronchial) to distal (bronchiolar) airways. No expression is detected in the terminal bronchioles, respiratory bronchioles or lung alveoli.

It is found in the secreted. In terms of biological role, lipid-binding protein which shows high specificity for the surfactant phospholipid dipalmitoylphosphatidylcholine (DPPC). Plays a role in the innate immune responses of the upper airways. Reduces the surface tension in secretions from airway epithelia and inhibits the formation of biofilm by pathogenic Gram-negative bacteria, such as P.aeruginosa and K.pneumoniae. Negatively regulates proteolytic cleavage of SCNN1G, an event that is required for activation of the epithelial sodium channel (ENaC), and thereby contributes to airway surface liquid homeostasis and proper clearance of mucus. Plays a role in the airway inflammatory response after exposure to irritants. May attract macrophages and neutrophils. This chain is BPI fold-containing family A member 1 (Bpifa1), found in Mus musculus (Mouse).